Reading from the N-terminus, the 518-residue chain is Sensory neuron membrane protein 1 (518 aa).

Residues 1-8 (MKTAEKLG) are Cytoplasmic-facing. The helical transmembrane segment at 9-29 (IIGTTISIFGIGFGWGVFPWL) threads the bilayer. Topologically, residues 30–456 (IRMQIGRVSL…ELFRILQFLD (427 aa)) are extracellular. 6 N-linked (GlcNAc...) asparagine glycosylation sites follow: N64, N186, N225, N316, N334, and N381. Disulfide bonds link C265-C330, C294-C349, and C332-C338. Residues 457-477 (VIKWVITLFGAGVVSGGVGLY) traverse the membrane as a helical segment. The Cytoplasmic portion of the chain corresponds to 478–518 (YKEKNSLPITPTSSATSKKIDNPTDKTTTHELGHTNFGYIN).

It belongs to the CD36 family.

It localises to the cell membrane. Its function is as follows. Plays an olfactory role that is not restricted to pheromone sensitivity. This Pediculus humanus subsp. corporis (Body louse) protein is Sensory neuron membrane protein 1.